Reading from the N-terminus, the 235-residue chain is Ribitol-5-phosphate cytidylyltransferase (235 aa).

Residues 7 to 10 (LAGG), 82 to 88 (GADRNTS), and S113 each bind CTP.

It belongs to the IspD/TarI cytidylyltransferase family. TarI subfamily.

The enzyme catalyses D-ribitol 5-phosphate + CTP + H(+) = CDP-L-ribitol + diphosphate. The protein operates within cell wall biogenesis; poly(ribitol phosphate) teichoic acid biosynthesis. Catalyzes the transfer of the cytidylyl group of CTP to D-ribitol 5-phosphate. The chain is Ribitol-5-phosphate cytidylyltransferase from Streptococcus pneumoniae (strain Hungary19A-6).